Consider the following 154-residue polypeptide: D-aminoacyl-tRNA deacylase (154 aa).

Positions 142–143 (GP) match the Gly-cisPro motif, important for rejection of L-amino acids motif.

The protein belongs to the DTD family. In terms of assembly, homodimer.

It localises to the cytoplasm. The catalysed reaction is glycyl-tRNA(Ala) + H2O = tRNA(Ala) + glycine + H(+). It carries out the reaction a D-aminoacyl-tRNA + H2O = a tRNA + a D-alpha-amino acid + H(+). An aminoacyl-tRNA editing enzyme that deacylates mischarged D-aminoacyl-tRNAs. Also deacylates mischarged glycyl-tRNA(Ala), protecting cells against glycine mischarging by AlaRS. Acts via tRNA-based rather than protein-based catalysis; rejects L-amino acids rather than detecting D-amino acids in the active site. By recycling D-aminoacyl-tRNA to D-amino acids and free tRNA molecules, this enzyme counteracts the toxicity associated with the formation of D-aminoacyl-tRNA entities in vivo and helps enforce protein L-homochirality. The chain is D-aminoacyl-tRNA deacylase from Polaromonas naphthalenivorans (strain CJ2).